A 237-amino-acid chain; its full sequence is N-demethylindolmycin N-methyltransferase (237 aa).

This sequence belongs to the methyltransferase superfamily.

The catalysed reaction is N-demethylindolmycin + S-adenosyl-L-methionine = indolmycin + S-adenosyl-L-homocysteine + H(+). Its function is as follows. Involved in the biosynthesis of the antibiotic indolmycin, an inhibitor of the bacterial tryptophan-tRNA synthetases. Catalyzes the methylation of N-demethylindolmycin to yield indolmycin, with S-adenosylmethionine (AdoMet) acting as the methyl donor. The protein is N-demethylindolmycin N-methyltransferase of Streptomyces griseus.